We begin with the raw amino-acid sequence, 799 residues long: Homeobox protein engrailed (799 aa).

Disordered stretches follow at residues L189 to K331, G369 to Q444, H554 to K664, and S678 to F705. The span at Q210–S222 shows a compositional bias: polar residues. Basic and acidic residues-rich tracts occupy residues S228–C239 and R246–V256. Polar residues-rich tracts occupy residues L284 to H299 and H377 to D401. Residues E416–S431 are compositionally biased toward low complexity. Composition is skewed to basic and acidic residues over residues D608 to S619 and V629 to N648. A DNA-binding region (homeobox) is located at residues E698–V757.

This sequence belongs to the engrailed homeobox family. In terms of tissue distribution, expressed in the dorsal ectoderm of early gastrulae in a band corresponding to the peripheral area of the presumptive shell gland. Also expressed at four points along the posterior ectoderm. In late gastrulae, it is predominantly expressed in the peripheral ectoderm of the shell gland and in spots at the posterior end behind the presumptive foot. Expressed in late trochophore larvae at four points behind the foot, at two locations at the base of the foot and in the peripheral ectoderm of the shell gland.

The protein resides in the nucleus. May be involved in shell and shell gland formation during development. The chain is Homeobox protein engrailed from Lymnaea stagnalis (Great pond snail).